A 160-amino-acid chain; its full sequence is Secreted RxLR effector protein 83 (160 aa).

A signal peptide spans 1-21; sequence MLVLLAATFFIYISRLTSTDA. Residues 27–30 carry the RxLR motif; the sequence is RGLR. N-linked (GlcNAc...) asparagine glycosylation is found at Asn-39 and Asn-131.

It belongs to the RxLR effector family.

Its subcellular location is the secreted. It is found in the host nucleus. The protein localises to the host cytoplasm. Secreted effector that completely suppresses the host cell death induced by cell death-inducing proteins. This is Secreted RxLR effector protein 83 from Plasmopara viticola (Downy mildew of grapevine).